The sequence spans 403 residues: F-box only protein 22 (403 aa).

M1 is subject to N-acetylmethionine. The F-box domain occupies 19 to 71 (STFVLSNLAEVVERVLTFLPAKALLRVACVCRLWRECVRRVLRTHRSVTWISA). S128 bears the Phosphoserine mark. K194 is modified (N6-acetyllysine).

In terms of assembly, directly interacts with SKP1 and CUL1.

It localises to the cytoplasm. The protein localises to the myofibril. Its subcellular location is the sarcomere. It is found in the z line. Its function is as follows. Substrate-recognition component of the SCF (SKP1-CUL1-F-box protein)-type E3 ubiquitin ligase complex. Promotes the proteasome-dependent degradation of key sarcomeric proteins, such as alpha-actinin (ACTN2) and filamin-C (FLNC), essential for maintenance of normal contractile function. This Pongo abelii (Sumatran orangutan) protein is F-box only protein 22 (FBXO22).